Consider the following 804-residue polypeptide: Angiotensin-converting enzyme 2 (804 aa).

The N-terminal stretch at 1-17 (MTGSFWLLLSLVAVTAA) is a signal peptide. The Extracellular segment spans residues 18-739 (QSTTEEQAKT…LGPPYEPPVT (722 aa)). Positions 19–606 (STTEEQAKTF…QNRNSFVGWS (588 aa)) constitute a Peptidase M2 domain. N-linked (GlcNAc...) asparagine glycans are attached at residues asparagine 53 and asparagine 90. Arginine 168 lines the chloride pocket. Residue arginine 272 participates in substrate binding. A glycan (N-linked (GlcNAc...) asparagine) is linked at asparagine 298. Residues cysteine 343 and cysteine 360 are joined by a disulfide bond. 344–345 (HP) is a substrate binding site. Histidine 373 lines the Zn(2+) pocket. Residue glutamate 374 is the Proton acceptor of the active site. The Zn(2+) site is built by histidine 377 and glutamate 401. Asparagine 431 carries N-linked (GlcNAc...) asparagine glycosylation. Positions 476 and 480 each coordinate chloride. Catalysis depends on histidine 504, which acts as the Proton donor. Tyrosine 514 lines the substrate pocket. An intrachain disulfide couples cysteine 529 to cysteine 541. An N-linked (GlcNAc...) asparagine glycan is attached at asparagine 545. The Collectrin-like domain occupies 613 to 804 (SDQSIKVRIS…QNIDDVQTSL (192 aa)). An essential for cleavage by ADAM17 region spans residues 651-658 (RKYFSEAR). Residues asparagine 659 and asparagine 689 are each glycosylated (N-linked (GlcNAc...) asparagine). Residues 696–715 (RTEVENAIRLSRDRINDVFQ) are essential for cleavage by TMPRSS11D and TMPRSS2. The chain crosses the membrane as a helical span at residues 740 to 760 (IWLIIFGVVMGVVVIGIVVLI). Over 761-804 (FTGIRNRRKKNQASSEENPYGSVDLNKGENNSGFQNIDDVQTSL) the chain is Cytoplasmic. Positions 771–804 (NQASSEENPYGSVDLNKGENNSGFQNIDDVQTSL) are disordered. The LIR signature appears at 777 to 785 (ENPYGSVDL). Tyrosine 780 carries the phosphotyrosine modification. Positions 780–783 (YGSV) match the Endocytic sorting signal motif. The short motif at 780–784 (YGSVD) is the SH2-binding element. Residue serine 782 is modified to Phosphoserine. Lysine 787 participates in a covalent cross-link: Glycyl lysine isopeptide (Lys-Gly) (interchain with G-Cter in ubiquitin). A compositionally biased stretch (polar residues) spans 788-804 (GENNSGFQNIDDVQTSL). Positions 791–794 (NSGF) match the PTB motif. Positions 802–804 (TSL) match the PDZ-binding motif.

This sequence belongs to the peptidase M2 family. In terms of assembly, homodimer. Interacts with the catalytically active form of TMPRSS2. Interacts with SLC6A19; this interaction is essential for expression and function of SLC6A19 in intestine. Interacts with ITGA5:ITGB1. Probably interacts (via endocytic sorting signal motif) with AP2M1; the interaction is inhibited by phosphorylation of Tyr-780. Interacts (via PDZ-binding motif) with NHERF1 (via PDZ domains); the interaction may enhance ACE2 membrane residence. Zn(2+) serves as cofactor. Requires chloride as cofactor. Post-translationally, proteolytic cleavage by ADAM17 generates a secreted form. Also cleaved by serine proteases: TMPRSS2, TMPRSS11D and HPN/TMPRSS1. In terms of processing, phosphorylated. Phosphorylation at Tyr-780 probably inhibits interaction with AP2M1 and enables interactions with proteins containing SH2 domains. Ubiquitinated. Ubiquitinated on Lys-787 via 'Lys-48'-linked ubiquitin. 'Lys-48'-linked deubiquitinated by USP50 on the Lys-787; leading to its stabilization.

The protein localises to the secreted. It is found in the cell membrane. The protein resides in the cytoplasm. It localises to the cell projection. Its subcellular location is the cilium. The protein localises to the apical cell membrane. The catalysed reaction is angiotensin II + H2O = angiotensin-(1-7) + L-phenylalanine. The enzyme catalyses angiotensin I + H2O = angiotensin-(1-9) + L-leucine. It catalyses the reaction bradykinin(1-8) + H2O = bradykinin(1-7) + L-phenylalanine. It carries out the reaction neurotensin + H2O = neurotensin-(1-12) + L-leucine. The catalysed reaction is kinetensin + H2O = kinetensin-(1-8) + L-leucine. The enzyme catalyses dynorphin A-(1-13) + H2O = dynorphin A-(1-12) + L-lysine. It catalyses the reaction apelin-13 + H2O = apelin-12 + L-phenylalanine. It carries out the reaction [Pyr1]apelin-13 + H2O = [Pyr1]apelin-12 + L-phenylalanine. The catalysed reaction is apelin-17 + H2O = apelin-16 + L-phenylalanine. In terms of biological role, essential counter-regulatory carboxypeptidase of the renin-angiotensin hormone system that is a critical regulator of blood volume, systemic vascular resistance, and thus cardiovascular homeostasis. Converts angiotensin I to angiotensin 1-9, a nine-amino acid peptide with anti-hypertrophic effects in cardiomyocytes, and angiotensin II to angiotensin 1-7, which then acts as a beneficial vasodilator and anti-proliferation agent, counterbalancing the actions of the vasoconstrictor angiotensin II. Also removes the C-terminal residue from three other vasoactive peptides, neurotensin, kinetensin, and des-Arg bradykinin, but is not active on bradykinin. Also cleaves other biological peptides, such as apelins, casomorphins and dynorphin A. Plays an important role in amino acid transport by acting as binding partner of amino acid transporter SLC6A19 in intestine, regulating trafficking, expression on the cell surface, and its catalytic activity. The protein is Angiotensin-converting enzyme 2 (ACE2) of Bos taurus (Bovine).